The chain runs to 254 residues: Attacin-A (254 aa).

The N-terminal stretch at 1 to 18 is a signal peptide; sequence MFTYKLILGLVLVVSASA. Positions 19–62 are excised as a propeptide; the sequence is RYLVFEDLEGESYLVPNQAEDEQVLEGEPFYENAVQLASPRVRR.

The protein belongs to the attacin/sarcotoxin-2 family.

The protein localises to the secreted. Functionally, hemolymph antibacterial protein. The protein is Attacin-A of Trichoplusia ni (Cabbage looper).